Consider the following 260-residue polypeptide: 1-(5-phosphoribosyl)-5-[(5-phosphoribosylamino)methylideneamino] imidazole-4-carboxamide isomerase (260 aa).

D8 serves as the catalytic Proton acceptor. D130 serves as the catalytic Proton donor.

It belongs to the HisA/HisF family.

Its subcellular location is the cytoplasm. It catalyses the reaction 1-(5-phospho-beta-D-ribosyl)-5-[(5-phospho-beta-D-ribosylamino)methylideneamino]imidazole-4-carboxamide = 5-[(5-phospho-1-deoxy-D-ribulos-1-ylimino)methylamino]-1-(5-phospho-beta-D-ribosyl)imidazole-4-carboxamide. It functions in the pathway amino-acid biosynthesis; L-histidine biosynthesis; L-histidine from 5-phospho-alpha-D-ribose 1-diphosphate: step 4/9. In Chlorobium phaeobacteroides (strain BS1), this protein is 1-(5-phosphoribosyl)-5-[(5-phosphoribosylamino)methylideneamino] imidazole-4-carboxamide isomerase.